Reading from the N-terminus, the 479-residue chain is Anaerobic nitric oxide reductase flavorubredoxin (479 aa).

The zinc metallo-hydrolase stretch occupies residues 30–210 (LRGSSYNSYL…PFSRLVTPKI (181 aa)). Residues histidine 79, glutamate 81, aspartate 83, histidine 147, aspartate 166, and histidine 227 each coordinate Fe cation. The 140-residue stretch at 254–393 (ITIFYDTMSN…LCRQHGRDIA (140 aa)) folds into the Flavodoxin-like domain. Residues 260–264 (TMSNN) and 342–369 (AFGS…EMSL) contribute to the FMN site. The Rubredoxin-like domain occupies 423–474 (GPKMQCSVCQWIYDPALGEPLQDVAPGTPWSDVPDNFLCPECSLGKDVFDVL). 4 residues coordinate Fe cation: cysteine 428, cysteine 431, cysteine 461, and cysteine 464.

This sequence in the N-terminal section; belongs to the zinc metallo-hydrolase group 3 family. In terms of assembly, homotetramer. It depends on Fe cation as a cofactor. FMN is required as a cofactor.

It is found in the cytoplasm. It participates in nitrogen metabolism; nitric oxide reduction. Anaerobic nitric oxide reductase; uses NADH to detoxify nitric oxide (NO), protecting several 4Fe-4S NO-sensitive enzymes. Has at least 2 reductase partners, only one of which (NorW, flavorubredoxin reductase) has been identified. NO probably binds to the di-iron center; electrons enter from the NorW at rubredoxin and are transferred sequentially to the FMN center and the di-iron center. Also able to function as an aerobic oxygen reductase. The chain is Anaerobic nitric oxide reductase flavorubredoxin from Salmonella arizonae (strain ATCC BAA-731 / CDC346-86 / RSK2980).